A 460-amino-acid polypeptide reads, in one-letter code: Mercuric reductase (460 aa).

The HMA domain occupies 1-65 (MTHLKITGMT…AVAGLGYKAM (65 aa)). Residues Cys-11 and Cys-14 each contribute to the a metal cation site. Residues Ala-110, Gly-130, and Thr-135 each contribute to the FAD site. The cysteines at positions 136 and 141 are disulfide-linked. Positions 145 and 211 each coordinate FAD. The Hg(2+) site is built by Cys-457 and Cys-458.

Belongs to the class-I pyridine nucleotide-disulfide oxidoreductase family. As to quaternary structure, homodimer. It depends on FAD as a cofactor.

It catalyses the reaction Hg + NADP(+) + H(+) = Hg(2+) + NADPH. Resistance to Hg(2+) in bacteria appears to be governed by a specialized system which includes mercuric reductase. MerA protein is responsible for volatilizing mercury as Hg(0). In Serratia marcescens, this protein is Mercuric reductase (merA).